The following is a 527-amino-acid chain: Hopanoid C-2 methylase (527 aa).

Residues 36-148 enclose the B12-binding domain; the sequence is VAAFMPPQGL…AKLTHDVTRP (113 aa). Positions 173-408 constitute a Radical SAM core domain; that stretch reads AECSKYLLGS…HDQVVAMWKD (236 aa). Residues C189, C193, and C196 each contribute to the [4Fe-4S] cluster site.

It belongs to the radical SAM superfamily. Requires [4Fe-4S] cluster as cofactor.

Its function is as follows. Required for methylation of hopanoids at the C-2 position. The sequence is that of Hopanoid C-2 methylase from Rhodopseudomonas palustris (strain TIE-1).